A 479-amino-acid chain; its full sequence is Probable periplasmic serine endoprotease DegP-like (479 aa).

The N-terminal stretch at 1-27 (MSMPSLKKYAAALFAVFLMGQSVAAHA) is a signal peptide. Catalysis depends on charge relay system residues H118, D148, and S221. Substrate-binding positions include 219–221 (GNS) and 276–280 (LGVVI). PDZ domains lie at 265–356 (LKAS…VREG) and 362–468 (KVAV…LRQG). The segment at 368–390 (MPADDGDEATNDAAPSAERSSNR) is disordered.

Belongs to the peptidase S1C family.

Its subcellular location is the periplasm. The enzyme catalyses Acts on substrates that are at least partially unfolded. The cleavage site P1 residue is normally between a pair of hydrophobic residues, such as Val-|-Val.. Might be efficient in the degradation of transiently denatured and unfolded proteins which accumulate in the periplasm following stress conditions. In Pseudomonas fulva (strain 12-X), this protein is Probable periplasmic serine endoprotease DegP-like.